We begin with the raw amino-acid sequence, 62 residues long: Mastoparan-AF (62 aa).

The first 25 residues, 1–25 (MKNTILILFTAFIALLGFFGMSAEA), serve as a signal peptide directing secretion. AXPX repeat units lie at residues 25–28 (ADPI), 29–32 (ADPI), 33–36 (ADPI), and 43–46 (ADPE). A propeptide spanning residues 26-47 (DPIADPIADPISGPNAEADPEA) is cleaved from the precursor. Position 61 is a phenylalanine amide (Phe-61).

The protein belongs to the MCD family. Mastoparan subfamily. In terms of tissue distribution, expressed by the venom gland.

The protein resides in the secreted. The protein localises to the target cell membrane. Antimicrobial and mast cell degranulating peptide. Has broad spectrum antibacterial activity against both Gram-positive and Gram-negative bacteria (S.aureus MIC=16-32 ug/ml, S.xylosus MIC=1.5 ug/ml, S.alactolyticus MIC=8 ug/ml, C.koseri MIC=4 ug/ml, E.coli MIC=4-32 ug/ml, K.pneumoniae MIC=32 ug/ml, P.aerugiosa MIC=96 ug/ml, S.choleraesuis MIC=16 ug/ml, S.typhimurium MIC=32 ug/ml, V.parahamelytics MIC=16 ug/ml). Is also active on multi-antibiotic resistant hemolytic E.coli O157:H7. Acts by affecting membrane permeability. On E.coli O157:H7, acts through multiple membrane disruption patterns, including large perforations (full opening) at apical ends (hollow tubes), vesicle budding, forming dents, and membrane corrugation and invagination leading to irregular pits or pores. Exerts 40% lower membrane permeabilization activities on E.coli O157:H7 than on the non-pathogen E.coli BL21. Shows little hemolytic activities on sheep, chicken and human erythrocytes, but with a higher activity on chicken erythrocytes. Its mast cell degranulation activity may be related to the activation of G-protein coupled receptors in mast cells as well as interaction with other proteins located in cell endosomal membranes in the mast cells. The polypeptide is Mastoparan-AF (Vespa affinis (Lesser banded hornet)).